The primary structure comprises 700 residues: Methionine synthase reductase (700 aa).

The region spanning 4–147 (FLLLYATQRG…VVEPWIDGLW (144 aa)) is the Flavodoxin-like domain. Residues 10–14 (TQRGQ) and 93–124 (LLGL…QHFY) contribute to the FMN site. The tract at residues 168-247 (TLAQASDAPL…SSLSIPAVSP (80 aa)) is hinge. 2 positions are modified to phosphoserine: Ser173 and Ser190. One can recognise an FAD-binding FR-type domain in the interval 272–534 (DPIFQVPISK…PRATNSFHLP (263 aa)). Lys292 lines the NADP(+) pocket. FAD-binding positions include 452–455 (RPYS) and 488–491 (GVCT). NADP(+)-binding positions include 611–612 (SR), 626–628 (YVQ), and Asp661. Trp699 is a binding site for FAD.

In terms of assembly, forms a multiprotein complex with MMACHC, MMADHC and MTR. The cofactor is FAD. FMN serves as cofactor.

It is found in the cytoplasm. It catalyses the reaction 2 methylcob(III)alamin-[methionine synthase] + 2 S-adenosyl-L-homocysteine + NADP(+) + H(+) = 2 cob(II)alamin-[methionine synthase] + 2 S-adenosyl-L-methionine + NADPH. It carries out the reaction 2 cob(II)alamin + A + 2 H2O + 2 H(+) = 2 aquacob(III)alamin + AH2. Key enzyme in methionine and folate homeostasis responsible for the reactivation of methionine synthase (MTR/MS) activity by catalyzing the reductive methylation of MTR-bound cob(II)alamin. Cobalamin (vitamin B12) forms a complex with MTR to serve as an intermediary in methyl transfer reactions that cycles between MTR-bound methylcob(III)alamin and MTR bound-cob(I)alamin forms, and occasional oxidative escape of the cob(I)alamin intermediate during the catalytic cycle leads to the inactive cob(II)alamin species. The processing of cobalamin in the cytosol occurs in a multiprotein complex composed of at least MMACHC, MMADHC, MTRR and MTR which may contribute to shuttle safely and efficiently cobalamin towards MTR in order to produce methionine. Also necessary for the utilization of methyl groups from the folate cycle, thereby affecting transgenerational epigenetic inheritance. Also acts as a molecular chaperone for methionine synthase by stabilizing apoMTR and incorporating methylcob(III)alamin into apoMTR to form the holoenzyme. Also serves as an aquacob(III)alamin reductase by reducing aquacob(III)alamin to cob(II)alamin; this reduction leads to stimulation of the conversion of apoMTR and aquacob(III)alamin to MTR holoenzyme. This chain is Methionine synthase reductase (Mtrr), found in Rattus norvegicus (Rat).